The primary structure comprises 319 residues: Polyprenyl transferase macG (319 aa).

9 helical membrane-spanning segments follow: residues 28–45 (AWLC…AAGM), 48–68 (VSLE…SVTA), 106–126 (AVVA…GTLG), 127–147 (PAVM…PFMK), 152–172 (FPQV…WVGI), 182–202 (ALPL…FYAT), 224–244 (VQIL…VTAL), 249–269 (SLIF…WHIL), and 289–309 (LGLY…VYDI).

Belongs to the UbiA prenyltransferase family. Requires Mg(2+) as cofactor.

It is found in the membrane. It participates in secondary metabolite biosynthesis; terpenoid biosynthesis. Its function is as follows. Polyprenyl transferase; part of the gene cluster that mediates the biosynthesis of macrophorins, isoprenoid epoxycyclohexenones containing cyclized drimane moieties. The first step of the pathway is the synthesis of 6-methylsalicylic acid (6-MSA) by the polyketide synthase macA. 6-MSA is then converted to m-cresol by the decarboxylase macB. The cytochrome P450 monooxygenase macC then catalyzes the oxidation of m-cresol to toluquinol. Epoxidation of toluquinol is then performed by the short chain dehydrogenase macD, with the help of macE, and a further prenylation by macG leads to 7-deacetoxyyanuthone A. The next step is the hydroxylation of C-22 of 7-deacetoxyyanuthone A by the cytochrome P450 monooxygenase macH to yield 22-deacetylyanuthone A. O-Mevalon transferase macI then attaches mevalon to the hydroxyl group of 22-deacetylyanuthone A to produce yanuthone E. The terpene cyclase macJ catalyzes the cyclization of 22-deacetylyanuthone A to macrophorin A. MacJ is also able to catalyze cyclization of yanuthone E and 7-deacetoxyyanuthone A to their corresponding macrophorins. The macJ products can be further modified by macH and macJ, as well as by the FAD-dependent monooxygenase macF, to produce additional macrophorins, including 4'-oxomacrophorin A, 4'-oxomacrophorin D and 4'-oxomacrophorin E. In Penicillium terrestre, this protein is Polyprenyl transferase macG.